The sequence spans 267 residues: Ribosomal RNA small subunit methyltransferase A (267 aa).

N18, L20, G45, E66, D91, and N112 together coordinate S-adenosyl-L-methionine.

The protein belongs to the class I-like SAM-binding methyltransferase superfamily. rRNA adenine N(6)-methyltransferase family. RsmA subfamily.

The protein localises to the cytoplasm. It carries out the reaction adenosine(1518)/adenosine(1519) in 16S rRNA + 4 S-adenosyl-L-methionine = N(6)-dimethyladenosine(1518)/N(6)-dimethyladenosine(1519) in 16S rRNA + 4 S-adenosyl-L-homocysteine + 4 H(+). Functionally, specifically dimethylates two adjacent adenosines (A1518 and A1519) in the loop of a conserved hairpin near the 3'-end of 16S rRNA in the 30S particle. May play a critical role in biogenesis of 30S subunits. This is Ribosomal RNA small subunit methyltransferase A from Shewanella amazonensis (strain ATCC BAA-1098 / SB2B).